We begin with the raw amino-acid sequence, 99 residues long: Integration host factor subunit alpha (99 aa).

The protein belongs to the bacterial histone-like protein family. As to quaternary structure, heterodimer of an alpha and a beta chain.

Functionally, this protein is one of the two subunits of integration host factor, a specific DNA-binding protein that functions in genetic recombination as well as in transcriptional and translational control. This chain is Integration host factor subunit alpha, found in Anaeromyxobacter sp. (strain Fw109-5).